The primary structure comprises 156 residues: Small ribosomal subunit protein uS7 (156 aa).

The protein belongs to the universal ribosomal protein uS7 family. Part of the 30S ribosomal subunit. Contacts proteins S9 and S11.

In terms of biological role, one of the primary rRNA binding proteins, it binds directly to 16S rRNA where it nucleates assembly of the head domain of the 30S subunit. Is located at the subunit interface close to the decoding center, probably blocks exit of the E-site tRNA. The chain is Small ribosomal subunit protein uS7 from Actinobacillus pleuropneumoniae serotype 5b (strain L20).